Here is an 814-residue protein sequence, read N- to C-terminus: Dimethyl sulfoxide reductase DmsA (814 aa).

The segment at residues 1–45 is a signal peptide (tat-type signal); that stretch reads MKTKIPDAVLAAEVSRRGLVKTTAIGGLAMASSALTLPFSRIAHA. A 4Fe-4S Mo/W bis-MGD-type domain is found at 56-118; sequence EKVIWSACTV…SMRRRVYNPD (63 aa). Positions 63, 67, 71, and 104 each coordinate [4Fe-4S] cluster. Mo-bis(molybdopterin guanine dinucleotide) is bound by residues 172 to 176, S205, 244 to 245, 270 to 271, 291 to 293, 386 to 387, R390, N488, 512 to 513, H701, 707 to 709, N788, and 804 to 805; these read LGGTM, ET, ID, GTD, WG, HST, and SH.

It belongs to the prokaryotic molybdopterin-containing oxidoreductase family. In terms of assembly, heterotrimeric enzyme composed of a catalytic heterodimer (DmsAB) and a membrane anchor protein (DmsC). [4Fe-4S] cluster serves as cofactor. Mo-bis(molybdopterin guanine dinucleotide) is required as a cofactor. Exported by the Tat system. The position of the signal peptide cleavage has been experimentally proven. Can also be exported by the Sec system.

It localises to the cell membrane. The catalysed reaction is dimethyl sulfide + a menaquinone + H2O = dimethyl sulfoxide + a menaquinol. Its activity is regulated as follows. Inhibited by dithionite, sodium hydrogensulfite and tungstate. Functionally, catalyzes the reduction of dimethyl sulfoxide (DMSO) to dimethyl sulfide (DMS). DMSO reductase serves as the terminal reductase under anaerobic conditions, with DMSO being the terminal electron acceptor. Terminal reductase during anaerobic growth on various sulfoxides and N-oxide compounds. Allows E.coli to grow anaerobically on DMSO as respiratory oxidant. This Escherichia coli (strain K12) protein is Dimethyl sulfoxide reductase DmsA (dmsA).